Reading from the N-terminus, the 391-residue chain is Ammonium transporter Amt1 (391 aa).

The Extracellular segment spans residues methionine 1–alanine 7. A helical membrane pass occupies residues tryptophan 8–tyrosine 27. Topologically, residues alanine 28–asparagine 38 are cytoplasmic. Residues methionine 39 to tyrosine 57 form a helical membrane-spanning segment. Over glycine 58–phenylalanine 89 the chain is Extracellular. Residues methionine 90–serine 106 form a helical membrane-spanning segment. Topologically, residues alanine 107 to lysine 113 are cytoplasmic. A helical membrane pass occupies residues valine 114–tryptophan 137. At glycine 138 to glycine 152 the chain is on the extracellular side. A helical membrane pass occupies residues glycine 153–threonine 170. Over isoleucine 171–proline 188 the chain is Cytoplasmic. The helical transmembrane segment at leucine 189–serine 208 threads the bilayer. Residues alanine 209 to isoleucine 217 are Extracellular-facing. The helical transmembrane segment at asparagine 218–isoleucine 237 threads the bilayer. Residues glycine 238–glycine 245 are Cytoplasmic-facing. A helical transmembrane segment spans residues serine 246–alanine 263. Residues alanine 264–aspartate 268 lie on the Extracellular side of the membrane. Residues valine 269–methionine 287 form a helical membrane-spanning segment. Topologically, residues aspartate 288–aspartate 300 are cytoplasmic. Residues alanine 301–leucine 319 form a helical membrane-spanning segment. Residues alanine 320–leucine 337 are Extracellular-facing. The chain crosses the membrane as a helical span at residues leucine 338–valine 363. Topologically, residues aspartate 364–threonine 391 are cytoplasmic.

It belongs to the ammonia transporter channel (TC 1.A.11.2) family. Homotrimer.

It is found in the cell membrane. In terms of biological role, involved in the uptake of ammonium/ammonia (NH(4)(+)/NH(3)). Transport is electrogenic. Transport the ammonium and methylammonium cation with high specificity. The chain is Ammonium transporter Amt1 from Archaeoglobus fulgidus (strain ATCC 49558 / DSM 4304 / JCM 9628 / NBRC 100126 / VC-16).